A 1151-amino-acid chain; its full sequence is Cation channel sperm-associated protein subunit gamma 1 (1151 aa).

Residues 1–38 (MVSRPAMSPVSPVWPRKPNLWAFWVLRLVLLLSLKSWA) form the signal peptide. The Extracellular portion of the chain corresponds to 39–1063 (EDTLQHCTWL…GLPLSSKRSS (1025 aa)). N356 carries N-linked (GlcNAc...) asparagine glycosylation. Residues 1064 to 1084 (FIVMVSTSFFIALVVFYILFC) form a helical membrane-spanning segment. At 1085-1151 (LVWPHIVKAW…NVQAKRAKVA (67 aa)) the chain is on the cytoplasmic side. Residues 1113–1123 (SSSSGGFTLHS) show a composition bias toward low complexity. Residues 1113 to 1151 (SSSSGGFTLHSHSSEGSFEGPSRPGTKEDNVQAKRAKVA) are disordered.

It belongs to the CATSPERG family.

The protein resides in the membrane. The polypeptide is Cation channel sperm-associated protein subunit gamma 1 (Catsperg1) (Mus musculus (Mouse)).